Consider the following 348-residue polypeptide: Alcohol dehydrogenase 1 (348 aa).

Position 2 is an N-acetylserine (Ser2). Cys44 contacts Zn(2+). NAD(+) is bound by residues His45, Thr46, and His49. Positions 67, 68, 98, 101, 104, 112, and 154 each coordinate Zn(2+). Residues Gly181, Gly182, Leu183, Asp202, and Lys207 each coordinate NAD(+). Residue Ser213 is modified to Phosphoserine. Residue Phe222 participates in NAD(+) binding. Thr223 is modified (phosphothreonine). Residues Lys226 and Lys234 each participate in a glycyl lysine isopeptide (Lys-Gly) (interchain with G-Cter in ubiquitin) cross-link. Val269 and Met271 together coordinate NAD(+). Position 279 is a phosphoserine (Ser279). A Glycyl lysine isopeptide (Lys-Gly) (interchain with G-Cter in ubiquitin) cross-link involves residue Lys287. Ser294 and Val296 together coordinate NAD(+). A Phosphoserine modification is found at Ser316. Lys319 is covalently cross-linked (Glycyl lysine isopeptide (Lys-Gly) (interchain with G-Cter in ubiquitin)). Residue Arg341 participates in NAD(+) binding.

The protein belongs to the zinc-containing alcohol dehydrogenase family. Homotetramer. Zn(2+) serves as cofactor.

It localises to the cytoplasm. It catalyses the reaction a primary alcohol + NAD(+) = an aldehyde + NADH + H(+). It carries out the reaction a secondary alcohol + NAD(+) = a ketone + NADH + H(+). The catalysed reaction is ethanol + NAD(+) = acetaldehyde + NADH + H(+). The enzyme catalyses allyl alcohol + NADP(+) = acrolein + NADPH + H(+). It catalyses the reaction 1-propanol + NAD(+) = propanal + NADH + H(+). It carries out the reaction butan-1-ol + NAD(+) = butanal + NADH + H(+). The catalysed reaction is hexan-1-ol + NAD(+) = hexanal + NADH + H(+). The enzyme catalyses (R)-lactaldehyde + NAD(+) = methylglyoxal + NADH + H(+). It catalyses the reaction octan-1-ol + NAD(+) = octanal + NADH + H(+). It carries out the reaction butan-2-ol + NAD(+) = butan-2-one + NADH + H(+). The catalysed reaction is propan-2-ol + NAD(+) = acetone + NADH + H(+). The enzyme catalyses isobutanol + NAD(+) = 2-methylpropanal + NADH + H(+). Functionally, preferentially fermentative isozyme that reduces acetaldehyde to ethanol during the fermentation of glucose. Major enzyme required for the conversion of acetaldehyde to ethanol. Plays a key role in the carbohydrate metabolism through the regeneration of NAD(+) from glycolytic NADH. In the reverse reaction, preferentially catalyzes the conversion of primary unbranched alcohols to their corresponding aldehydes. Also shows activity toward secondary alcohols. Most active with ethanol, and its activity decreases as the size of the alcohol is increased. This Saccharomyces cerevisiae (strain ATCC 204508 / S288c) (Baker's yeast) protein is Alcohol dehydrogenase 1 (ADH1).